A 493-amino-acid chain; its full sequence is Glutamate--tRNA ligase (493 aa).

The 'HIGH' region signature appears at 10-20 (PSPTGDPHVGT). The Zn(2+) site is built by Cys107, Cys109, Cys134, and His136. The short motif at 251 to 255 (KLSKR) is the 'KMSKS' region element. Lys254 contributes to the ATP binding site.

The protein belongs to the class-I aminoacyl-tRNA synthetase family. Glutamate--tRNA ligase type 1 subfamily. Monomer. Zn(2+) serves as cofactor.

The protein localises to the cytoplasm. It catalyses the reaction tRNA(Glu) + L-glutamate + ATP = L-glutamyl-tRNA(Glu) + AMP + diphosphate. Its function is as follows. Catalyzes the attachment of glutamate to tRNA(Glu) in a two-step reaction: glutamate is first activated by ATP to form Glu-AMP and then transferred to the acceptor end of tRNA(Glu). In Ectopseudomonas mendocina (strain ymp) (Pseudomonas mendocina), this protein is Glutamate--tRNA ligase.